The sequence spans 275 residues: NH(3)-dependent NAD(+) synthetase (275 aa).

Residue 50–57 (GISGGVDS) participates in ATP binding. Asp56 is a Mg(2+) binding site. Arg147 is a binding site for deamido-NAD(+). Thr167 is a binding site for ATP. A Mg(2+)-binding site is contributed by Glu172. Residues Lys180 and Asp187 each contribute to the deamido-NAD(+) site. 2 residues coordinate ATP: Lys196 and Thr218. A deamido-NAD(+)-binding site is contributed by 267–268 (HK).

It belongs to the NAD synthetase family. In terms of assembly, homodimer.

The enzyme catalyses deamido-NAD(+) + NH4(+) + ATP = AMP + diphosphate + NAD(+) + H(+). Its pathway is cofactor biosynthesis; NAD(+) biosynthesis; NAD(+) from deamido-NAD(+) (ammonia route): step 1/1. Functionally, catalyzes the ATP-dependent amidation of deamido-NAD to form NAD. Uses ammonia as a nitrogen source. In Pseudomonas fluorescens (strain Pf0-1), this protein is NH(3)-dependent NAD(+) synthetase.